Consider the following 215-residue polypeptide: MNTQVWRVCVGVMLFCFVGRIGCAEEKMVREEGLAVADGIYAVMETNRGTIVLSLFFEKAPLTVCNFVGLAEGTLAVCKGRPFYQGLTFHRVIKDFMIQGGDPQGNGTGGPGYQFPDECDPALRHDSPGVLSMANAGPGTNGSQFFITHVATPWLDGKHTVFGKVVEGMEVVHAIIAGDTIRSLKIVRRGAAAKRFVCDQAQFDQLRKRVSAASK.

Positions 38-197 (DGIYAVMETN…RRGAAAKRFV (160 aa)) constitute a PPIase cyclophilin-type domain.

Belongs to the cyclophilin-type PPIase family.

It catalyses the reaction [protein]-peptidylproline (omega=180) = [protein]-peptidylproline (omega=0). Functionally, PPIases accelerate the folding of proteins. It catalyzes the cis-trans isomerization of proline imidic peptide bonds in oligopeptides. The chain is Probable peptidyl-prolyl cis-trans isomerase (ppiB) from Treponema pallidum (strain Nichols).